Here is a 723-residue protein sequence, read N- to C-terminus: Catalase-peroxidase (723 aa).

Residues 96-224 (WHAAGSYRVA…LAAVMMGLIY (129 aa)) constitute a cross-link (tryptophyl-tyrosyl-methioninium (Trp-Tyr) (with M-250)). His-97 (proton acceptor) is an active-site residue. A cross-link (tryptophyl-tyrosyl-methioninium (Tyr-Met) (with W-96)) is located at residues 224 to 250 (YVNPEGVDGQPDPLKTAQDVRVTFARM). His-265 serves as a coordination point for heme b.

It belongs to the peroxidase family. Peroxidase/catalase subfamily. As to quaternary structure, homodimer or homotetramer. The cofactor is heme b. Formation of the three residue Trp-Tyr-Met cross-link is important for the catalase, but not the peroxidase activity of the enzyme.

It catalyses the reaction H2O2 + AH2 = A + 2 H2O. It carries out the reaction 2 H2O2 = O2 + 2 H2O. Functionally, bifunctional enzyme with both catalase and broad-spectrum peroxidase activity. The polypeptide is Catalase-peroxidase (Leptothrix cholodnii (strain ATCC 51168 / LMG 8142 / SP-6) (Leptothrix discophora (strain SP-6))).